The following is a 479-amino-acid chain: Adenosylhomocysteinase (479 aa).

Substrate-binding residues include T66, D142, and E203. 204 to 206 (TTT) provides a ligand contact to NAD(+). Substrate contacts are provided by K233 and D237. Residues N238, 267 to 272 (GYGDVG), E290, N325, 346 to 348 (IGH), and N394 contribute to the NAD(+) site.

This sequence belongs to the adenosylhomocysteinase family. NAD(+) serves as cofactor.

Its subcellular location is the cytoplasm. The enzyme catalyses S-adenosyl-L-homocysteine + H2O = L-homocysteine + adenosine. The protein operates within amino-acid biosynthesis; L-homocysteine biosynthesis; L-homocysteine from S-adenosyl-L-homocysteine: step 1/1. May play a key role in the regulation of the intracellular concentration of adenosylhomocysteine. This chain is Adenosylhomocysteinase, found in Nitratidesulfovibrio vulgaris (strain ATCC 29579 / DSM 644 / CCUG 34227 / NCIMB 8303 / VKM B-1760 / Hildenborough) (Desulfovibrio vulgaris).